We begin with the raw amino-acid sequence, 495 residues long: DDB1- and CUL4-associated factor 4 (495 aa).

A compositionally biased stretch (basic residues) spans 1–17 (MNKSRWQSRRRHGRRSH). Positions 1–66 (MNKSRWQSRR…TAGTSSVPEL (66 aa)) are disordered. The segment covering 24-34 (RLRDSEDRSDS) has biased composition (basic and acidic residues). The segment covering 51-62 (PSTSSGTAGTSS) has biased composition (low complexity). 2 WD repeats span residues 368–407 (FHDS…CVRQ) and 410–451 (GHVN…LLRT).

In terms of assembly, interacts with DDB1 and CUL4A.

It functions in the pathway protein modification; protein ubiquitination. Functionally, may function as a substrate receptor for CUL4-DDB1 E3 ubiquitin-protein ligase complex. The chain is DDB1- and CUL4-associated factor 4 (DCAF4) from Homo sapiens (Human).